The primary structure comprises 704 residues: Elongation factor G (704 aa).

The tr-type G domain maps to 8–291 (DKVRNIGIMA…AVVEYLASPV (284 aa)). GTP is bound by residues 17-24 (AHIDAGKT), 90-94 (DTPGH), and 144-147 (NKMD).

The protein belongs to the TRAFAC class translation factor GTPase superfamily. Classic translation factor GTPase family. EF-G/EF-2 subfamily.

The protein resides in the cytoplasm. Its function is as follows. Catalyzes the GTP-dependent ribosomal translocation step during translation elongation. During this step, the ribosome changes from the pre-translocational (PRE) to the post-translocational (POST) state as the newly formed A-site-bound peptidyl-tRNA and P-site-bound deacylated tRNA move to the P and E sites, respectively. Catalyzes the coordinated movement of the two tRNA molecules, the mRNA and conformational changes in the ribosome. The sequence is that of Elongation factor G from Chlorobium phaeobacteroides (strain DSM 266 / SMG 266 / 2430).